Reading from the N-terminus, the 734-residue chain is Subtilisin-like protease SBT3.2 (734 aa).

An N-terminal signal peptide occupies residues 1–19 (MTRALILVAICLMLTLNNA). A propeptide spans 20–88 (AETKVHIVYL…ESTLRFYELQ (69 aa)) (activation peptide). Residues 92–581 (TWDYLQHTSK…GGVVNSEKAA (490 aa)) form the Peptidase S8 domain. N108 carries an N-linked (GlcNAc...) asparagine glycan. D122 (charge relay system) is an active-site residue. An N-linked (GlcNAc...) asparagine glycan is attached at N143. H179 acts as the Charge relay system in catalysis. N-linked (GlcNAc...) asparagine glycans are attached at residues N326 and N355. The PA domain maps to 361–438 (VCEDLAKNPA…ELGTDILFYI (78 aa)). The N-linked (GlcNAc...) asparagine glycan is linked to N497. The Charge relay system role is filled by S512. N669 carries N-linked (GlcNAc...) asparagine glycosylation.

It belongs to the peptidase S8 family.

It localises to the secreted. This chain is Subtilisin-like protease SBT3.2, found in Arabidopsis thaliana (Mouse-ear cress).